Reading from the N-terminus, the 65-residue chain is Alpha-conotoxin BnIA (65 aa).

An N-terminal signal peptide occupies residues 1-21 (MGMRMMFTMFLLVVLATTVVS). Residues 22-48 (FASDRASDGRNAAAKDKASDLVALTVK) constitute a propeptide that is removed on maturation. Intrachain disulfides connect Cys-50-Cys-56 and Cys-51-Cys-64. A ser-Xaa-Pro motif, crucial for potent interaction with nAChR region spans residues 52 to 54 (SHP). Cysteine amide is present on Cys-64.

This sequence belongs to the conotoxin A superfamily. In terms of tissue distribution, expressed by the venom duct.

The protein localises to the secreted. Its function is as follows. Alpha-conotoxins act on postsynaptic membranes, they bind to the nicotinic acetylcholine receptors (nAChR) and thus inhibit them. This toxin inhibits acetylcholine-evoked currents reversibly in oocytes expressing the human alpha-7/CHRNA7 nAChR, and blocks nerve-evoked skeletal muscle contractions in isolated mouse neuromuscular preparations, but with a very low affinity. In Conus bandanus (Banded marble cone), this protein is Alpha-conotoxin BnIA.